Reading from the N-terminus, the 343-residue chain is L-threonine 3-dehydrogenase (343 aa).

Cysteine 38 contacts Zn(2+). Active-site charge relay system residues include threonine 40 and histidine 43. 6 residues coordinate Zn(2+): histidine 63, glutamate 64, cysteine 93, cysteine 96, cysteine 99, and cysteine 107. NAD(+)-binding positions include isoleucine 176, aspartate 196, arginine 201, leucine 261–isoleucine 263, and isoleucine 286–glycine 288.

Belongs to the zinc-containing alcohol dehydrogenase family. Homotetramer. The cofactor is Zn(2+).

The protein localises to the cytoplasm. The enzyme catalyses L-threonine + NAD(+) = (2S)-2-amino-3-oxobutanoate + NADH + H(+). The protein operates within amino-acid degradation; L-threonine degradation via oxydo-reductase pathway; glycine from L-threonine: step 1/2. Functionally, catalyzes the NAD(+)-dependent oxidation of L-threonine to 2-amino-3-ketobutyrate. The chain is L-threonine 3-dehydrogenase from Thermus thermophilus (strain ATCC 27634 / DSM 579 / HB8).